Here is a 357-residue protein sequence, read N- to C-terminus: Acyl-coenzyme A:6-aminopenicillanic-acid-acyltransferase 40 kDa form (357 aa).

Residues D121 and R310 each coordinate 6-aminopenicillanate.

Belongs to the peptidase C45 family. The active form of the enzyme results from processing of the 40-kDa monomeric precursor to a heterodimer containing subunits of 11 and 29 kDa. The pre-AAT protein is synthesized as 40 kDa precursor which is then self-processed into an 11 kDa (protein A) and a 29 kDa (protein B). The B protein carries AAT activity.

It is found in the peroxisome matrix. It catalyses the reaction isopenicillin N + phenylacetyl-CoA + H2O = penicillin G + L-2-aminoadipate + CoA + H(+). Its pathway is antibiotic biosynthesis; penicillin G biosynthesis; penicillin G from L-alpha-aminoadipate and L-cysteine and L-valine: step 3/3. Nonribosomal peptide synthetase; part of the gene cluster that mediates the biosynthesis of penicillin, the world's most important antibiotic. AatA catalyzes the exchange of the alpha-aminoadipyl side chain of isopenicillin N for phenylacetic acid to yield penicillin. This step occurs in the peroxisomal matrix and the penM and paaT transporters are involved in the isopenicillin N and phenylacetic acid import into the peroxisome, respectively. The penicillin biosynthesis occurs via 3 enzymatic steps, the first corresponding to the production of the tripeptide N-[(5S)-5-amino-5-carboxypentanoyl]-L-cysteinyl-D-valine (LLD-ACV or ACV) by the NRPS acvA. The tripeptide ACV is then cyclized to isopenicillin N (IPN) by the isopenicillin N synthase ipnA that forms the beta-lactam nucleus. Finally, the alpha-aminoadipyl side chain is exchanged for phenylacetic acid by the isopenicillin N acyltransferase penDE to yield penicillin in the peroxisomal matrix. The chain is Acyl-coenzyme A:6-aminopenicillanic-acid-acyltransferase 40 kDa form from Emericella nidulans (strain FGSC A4 / ATCC 38163 / CBS 112.46 / NRRL 194 / M139) (Aspergillus nidulans).